Reading from the N-terminus, the 501-residue chain is MSKIVKRKEKKANDELTSLAEKIRAKALENQKKLIEAEKEGGSESDSEEDATAEKKKVLKSKSKSTVSTQNENTNEDESFESFSELNLVPELIQACKNLNYSKPTPIQSKAIPPALEGHDIIGLAQTGSGKTAAFAIPILNRLWHDQEPYYACILAPTRELAQQIKETFDSLGSLMGVRSTCIVGGMNMMDQARDLMRKPHIIIATPGRLMDHLENTKGFSLRKLKFLVMDEADRLLDMEFGPVLDRILKIIPTQERTTYLFSATMTSKIDKLQRASLTNPVKCAVSNKYQTVDTLVQTLMVVPGGLKNTYLIYLLNEFIGKTMIIFTRTKANAERLSGLCNLLEFSATALHGDLNQNQRMGALDLFKAGKRSILVATDVAARGLDIPSVDIVVNYDIPVDSKSYIHRVGRTARAGRSGKSISLVSQYDLELILRIEEVLGKKLPKESVDKNIILTLRDSVDKANGEVVMEMNRRNKEKIARGKGRRGRMMTRENMDMGER.

Residues 3–44 adopt a coiled-coil conformation; the sequence is KIVKRKEKKANDELTSLAEKIRAKALENQKKLIEAEKEGGSE. The disordered stretch occupies residues 36-79; the sequence is EAEKEGGSESDSEEDATAEKKKVLKSKSKSTVSTQNENTNEDES. Ser-43, Ser-45, and Ser-47 each carry phosphoserine. A Q motif motif is present at residues 81–109; sequence ESFSELNLVPELIQACKNLNYSKPTPIQS. Residues 112–284 form the Helicase ATP-binding domain; the sequence is IPPALEGHDI…RASLTNPVKC (173 aa). Residue 125–132 coordinates ATP; the sequence is AQTGSGKT. Residues 231 to 234 carry the DEAD box motif; it reads DEAD. The region spanning 307 to 461 is the Helicase C-terminal domain; the sequence is LKNTYLIYLL…NIILTLRDSV (155 aa). A disordered region spans residues 480–501; it reads IARGKGRRGRMMTRENMDMGER. Residues 491 to 501 are compositionally biased toward basic and acidic residues; sequence MTRENMDMGER.

It belongs to the DEAD box helicase family. DDX47/RRP3 subfamily. As to quaternary structure, interacts with the SSU processome.

It localises to the nucleus. It carries out the reaction ATP + H2O = ADP + phosphate + H(+). In terms of biological role, ATP-dependent rRNA helicase required for pre-ribosomal RNA processing. Involved in the maturation of the 35S-pre-rRNA and to its cleavage to mature 18S rRNA. The chain is ATP-dependent rRNA helicase RRP3 from Saccharomyces cerevisiae (strain YJM789) (Baker's yeast).